Here is a 143-residue protein sequence, read N- to C-terminus: Transcriptional regulator MraZ (143 aa).

SpoVT-AbrB domains follow at residues Thr-5–Glu-47 and Thr-76–Ala-119.

It belongs to the MraZ family. As to quaternary structure, forms oligomers.

Its subcellular location is the cytoplasm. It localises to the nucleoid. The sequence is that of Transcriptional regulator MraZ from Mycolicibacterium smegmatis (strain ATCC 700084 / mc(2)155) (Mycobacterium smegmatis).